The chain runs to 835 residues: Protein translocase subunit SecA (835 aa).

Residues Gln-85, 103-107 (GEGKT), and Asp-495 contribute to the ATP site. The segment at 806-835 (KVFLNNDSSDDESSKKRRTRKVRTSKKPWN) is disordered. A compositionally biased stretch (basic residues) spans 820 to 835 (KKRRTRKVRTSKKPWN).

The protein belongs to the SecA family. In terms of assembly, monomer and homodimer. Part of the essential Sec protein translocation apparatus which comprises SecA, SecYEG and auxiliary proteins SecDF. Other proteins may also be involved.

The protein resides in the cell membrane. It localises to the cytoplasm. It catalyses the reaction ATP + H2O + cellular proteinSide 1 = ADP + phosphate + cellular proteinSide 2.. Functionally, part of the Sec protein translocase complex. Interacts with the SecYEG preprotein conducting channel. Has a central role in coupling the hydrolysis of ATP to the transfer of proteins into and across the cell membrane, serving as an ATP-driven molecular motor driving the stepwise translocation of polypeptide chains across the membrane. The protein is Protein translocase subunit SecA of Onion yellows phytoplasma (strain OY-M).